The following is a 676-amino-acid chain: Envelope glycoprotein (676 aa).

The N-terminal stretch at 1 to 32 (MGVTGILQLPRDRFKRTSFFLWVIILFQRTFS) is a signal peptide. At 33 to 650 (IPLGVIHNST…NDNWWTGWRQ (618 aa)) the chain is on the extracellular side. The N-linked (GlcNAc...) asparagine; by host glycan is linked to Asn40. 5 cysteine pairs are disulfide-bonded: Cys53-Cys609, Cys108-Cys135, Cys121-Cys147, Cys511-Cys556, and Cys601-Cys608. Positions 54–201 (RDKLSSTNQL…DFFSSHPLRE (148 aa)) are receptor-binding. Residues Asn204, Asn228, Asn238, Asn257, Asn268, Asn296, Asn317, Asn333, Asn346, Asn386, and Asn413 are each glycosylated (N-linked (GlcNAc...) asparagine; by host). A mucin-like region region spans residues 305-485 (ELSFTAVSNR…SGKLGLITNT (181 aa)). The span at 314-335 (RAKNISGQSPARTSSDPGTNTT) shows a compositional bias: polar residues. The interval 314–337 (RAKNISGQSPARTSSDPGTNTTTE) is disordered. Disordered regions lie at residues 373 to 392 (TSLR…HNTP) and 402 to 479 (TQVE…SGKL). Over residues 414–427 (ASTTSDTPPATTAA) the composition is skewed to low complexity. 3 N-linked (GlcNAc...) asparagine; by host glycosylation sites follow: Asn436, Asn454, and Asn462. Positions 447–464 (ATTTSPQNHSETAGNNNT) are enriched in polar residues. Residues 524–539 (GAAIGLAWIPYFGPAA) are fusion peptide. Positions 554-595 (LICGLRQLANETTQALQLFLRATTELRTFSILNRKAIDFLLQ) form a coiled coil. N-linked (GlcNAc...) asparagine; by host glycosylation is present at Asn563. A coiled-coil region spans residues 615–634 (WTKNITDKIDQIIHDFVDKT). Asn618 carries N-linked (GlcNAc...) asparagine; by host glycosylation. The chain crosses the membrane as a helical span at residues 651 to 671 (WIPAGIGVTGVIIAVIALFCI). Residues Cys670 and Cys672 are each lipidated (S-palmitoyl cysteine; by host). The Cytoplasmic portion of the chain corresponds to 672–676 (CKFVF).

This sequence belongs to the filoviruses glycoprotein family. In terms of assembly, homotrimer; each monomer consists of a GP1 and a GP2 subunit linked by disulfide bonds. The resulting peplomers (GP1,2) protrude from the virus surface as spikes. Interacts with host integrin alpha-V/ITGAV. Interacts with host CLEC10A. Binds also to host CD209 and CLEC4M/DC-SIGN(R). Interacts with host FOLR1. Interacts with BST2; this interaction inhibits the antiviral effect of BST2 and this allows viral release from infected cells. Interacts with host FCN1; this interaction enhances viral entry. Interacts with host TLR4; this interaction induces cell death in T-lymphocytes or proinflammatory cytokines and SOCS1 production in monocytes. Interacts with host entry receptor NPC1. As to quaternary structure, GP1 and GP2delta are part of GP1,2delta soluble complexes released by ectodomain shedding. In terms of processing, the signal peptide region modulates GP's high mannose glycosylation, thereby determining the efficiency of the interactions with DC-SIGN(R). Post-translationally, N-glycosylated. O-glycosylated in the mucin-like region. In terms of processing, palmitoylation of GP2 is not required for its function. Post-translationally, specific enzymatic cleavages in vivo yield mature proteins. The precursor is processed into GP1 and GP2 by host cell furin in the trans Golgi, and maybe by other host proteases, to yield the mature GP1 and GP2 proteins. The cleavage site corresponds to the furin optimal cleavage sequence [KR]-X-[KR]-R. This cleavage does not seem to be required for function. After the internalization of the virus into cell endosomes, GP1 C-terminus is removed by the endosomal proteases cathepsin B, cathepsin L, or both, leaving a 19-kDa N-terminal fragment which is further digested by cathepsin B. Proteolytic processing of GP1,2 by host ADAM17 can remove the transmembrane anchor of GP2 and leads to shedding of complexes consisting in GP1 and truncated GP2 (GP1,2delta).

The protein resides in the virion membrane. Its subcellular location is the host cell membrane. It localises to the secreted. Trimeric GP1,2 complexes form the virion surface spikes and mediate the viral entry processes, with GP1 acting as the receptor-binding subunit and GP2 as the membrane fusion subunit. At later times of infection, down-regulates the expression of various host cell surface molecules that are essential for immune surveillance and cell adhesion. Down-modulates several integrins including ITGA1, ITGA2, ITGA3, ITGA4, ITGA5, ITGA6, ITGAV and ITGB1. This decrease in cell adhesion molecules may lead to cell detachment, contributing to the disruption of blood vessel integrity and hemorrhages developed during infection (cytotoxicity). Interacts with host TLR4 and thereby stimulates the differentiation and activation of monocytes leading to bystander death of T-lymphocytes. Down-regulates as well the function of host natural killer cells. Counteracts the antiviral effect of host BST2/tetherin that restricts release of progeny virions from infected cells. However, cooperates with VP40 and host BST2 to activate canonical NF-kappa-B pathway in a manner dependent on neddylation. Functionally, functions as a decoy for anti-GP1,2 antibodies thereby contributing to viral immune evasion. Interacts and activates host macrophages and dendritic cells inducing up-regulation of cytokine transcription. This effect is mediated throught activation of host TLR4. In terms of biological role, responsible for binding to the receptor(s) on target cells. Interacts with CD209/DC-SIGN and CLEC4M/DC-SIGNR which act as cofactors for virus entry into dendritic cells (DCs) and endothelial cells. Binding to the macrophage specific lectin CLEC10A also seems to enhance virus infectivity. Interaction with FOLR1/folate receptor alpha may be a cofactor for virus entry in some cell types, although results are contradictory. Members of the Tyro3 receptor tyrosine kinase family also seem to be cell entry factors in filovirus infection. Once attached, the virions are internalized through clathrin-dependent endocytosis and/or macropinocytosis. After internalization of the virus into the endosomes of the host cell, proteolysis of GP1 by two cysteine proteases, CTSB/cathepsin B and CTSL/cathepsin L removes the glycan cap and allows GP1 binding to the host entry receptor NPC1. NPC1-binding, Ca(2+) and acidic pH induce a conformational change of GP2, which unmasks its fusion peptide and permit membranes fusion. Its function is as follows. Acts as a class I viral fusion protein. Under the current model, the protein has at least 3 conformational states: pre-fusion native state, pre-hairpin intermediate state, and post-fusion hairpin state. During viral and target cell membrane fusion, the coiled coil regions (heptad repeats) assume a trimer-of-hairpins structure, positioning the fusion peptide in close proximity to the C-terminal region of the ectodomain. The formation of this structure appears to drive apposition and subsequent fusion of viral and target cell membranes. Responsible for penetration of the virus into the cell cytoplasm by mediating the fusion of the membrane of the endocytosed virus particle with the endosomal membrane. Low pH in endosomes induces an irreversible conformational change in GP2, releasing the fusion hydrophobic peptide. The chain is Envelope glycoprotein (GP) from Epomops franqueti (Franquet's epauletted fruit bat).